A 441-amino-acid chain; its full sequence is COBRA-like protein 2 (441 aa).

The first 28 residues, 1 to 28 (MNILFSRFSFLLLFLCSWTSFTFTTTEA), serve as a signal peptide directing secretion. Asn-37, Asn-162, Asn-170, Asn-209, Asn-234, Asn-249, Asn-314, Asn-329, and Asn-348 each carry an N-linked (GlcNAc...) asparagine glycan. Asn-417 carries GPI-anchor amidated asparagine lipidation. A propeptide spans 418–441 (ASPNIATSPFVILLITFLSVLILM) (removed in mature form).

The protein belongs to the COBRA family. Expressed in roots, stems, leaves, flowers and siliques.

It localises to the cell membrane. This is COBRA-like protein 2 (COBL2) from Arabidopsis thaliana (Mouse-ear cress).